The following is a 374-amino-acid chain: Homoserine O-acetyltransferase (374 aa).

An AB hydrolase-1 domain is found at 45 to 353; the sequence is NAILVLHALT…PYGHDAFLIE (309 aa). Catalysis depends on Ser-151, which acts as the Nucleophile. Arg-220 is a binding site for substrate. Residues Asp-314 and His-347 contribute to the active site. A substrate-binding site is contributed by Asp-348.

The protein belongs to the AB hydrolase superfamily. MetX family. Homodimer.

The protein resides in the cytoplasm. The catalysed reaction is L-homoserine + acetyl-CoA = O-acetyl-L-homoserine + CoA. It participates in amino-acid biosynthesis; L-methionine biosynthesis via de novo pathway; O-acetyl-L-homoserine from L-homoserine: step 1/1. Functionally, transfers an acetyl group from acetyl-CoA to L-homoserine, forming acetyl-L-homoserine. The sequence is that of Homoserine O-acetyltransferase from Moorella thermoacetica (strain ATCC 39073 / JCM 9320).